The sequence spans 200 residues: ATP-dependent Clp protease proteolytic subunit 3 (200 aa).

Ser101 functions as the Nucleophile in the catalytic mechanism. The active site involves His126.

This sequence belongs to the peptidase S14 family. Fourteen ClpP subunits assemble into 2 heptameric rings which stack back to back to give a disk-like structure with a central cavity, resembling the structure of eukaryotic proteasomes.

Its subcellular location is the cytoplasm. The catalysed reaction is Hydrolysis of proteins to small peptides in the presence of ATP and magnesium. alpha-casein is the usual test substrate. In the absence of ATP, only oligopeptides shorter than five residues are hydrolyzed (such as succinyl-Leu-Tyr-|-NHMec, and Leu-Tyr-Leu-|-Tyr-Trp, in which cleavage of the -Tyr-|-Leu- and -Tyr-|-Trp bonds also occurs).. Functionally, cleaves peptides in various proteins in a process that requires ATP hydrolysis. Has a chymotrypsin-like activity. Plays a major role in the degradation of misfolded proteins. In Parasynechococcus marenigrum (strain WH8102), this protein is ATP-dependent Clp protease proteolytic subunit 3.